The following is an 882-amino-acid chain: MAAWSPSVGIGSCCLNNGITRTWKFPSARLFTGRKNKIKLGSETLMFTRKRFMGDLVTSALQSYQFSKICASKTSIELREALSSRRAEADDLKKVTSYSFRTKAGALVKVKVEKKREKYSILVYVSSLELSGDDKSRLVMVWGVYRSDSSCFLPLDFENSSQDSQTHTTETTFVKSSLSELMLGLEFDGKESPFYLSFHLKLVSGRDPDGQEMLTHRDTDFCIPVGFTAGHPLPLGLSSGPDDDSWNFSFFSRSSTNVVLCLYDDSTTDKPALELDLDPYVNRTGDVWHASVDNTWDFVRYGYRCKETAHSKEDVDVEGEPIVLDPYATVVGKSVSQKYLGSLSKSPSFDWGEDVSPNIPLEKLLVYRLNVKGFTQHRSSKLPSNVAGTFSGVAEKVSHLKTLGTNAVLLEPIFSFSEQKGPYFPFHFFSPMDIYGPSNSLESAVNSMKVMVKKLHSEGIEVLLEVVFTHTADSGALRGIDDSSYYYKGRANDLDSKSYLNCNYPVVQQLVLESLRYWVTEFHVDGFCFINASSLLRGVHGEQLSRPPLVEAIAFDPLLAETKLIADCWDPLEMMPKEVRFPHWKRWAELNTRYCRNVRNFLRGRGVLSDLATRICGSGDVFTDGRGPAFSFNYISRNSGLSLVDIVSFSGPELASELSWNCGEEGATNKSAVLQRRLKQIRNFLFIQYISLGVPVLNMGDECGISTRGSPLLESRKPFDWNLLASAFGTQITQFISFMTSVRARRSDVFQRRDFLKPENIVWYANDQTTPKWEDPASKFLALEIKSESEEEETASLAEPNEPKSNDLFIGFNASDHPESVVLPSLPDGSKWRRLVDTALPFPGFFSVEGETVVAEEPLQQLVVYEMKPYSCTLFETINTTA.

The N-terminal 70 residues, 1 to 70, are a transit peptide targeting the chloroplast; that stretch reads MAAWSPSVGI…LQSYQFSKIC (70 aa).

This sequence belongs to the glycosyl hydrolase 13 family. Associates with ISA1 to form the heteromultimeric complex Iso1 required for amylopectin synthesis.

It is found in the plastid. The protein resides in the chloroplast. The protein operates within glycan biosynthesis; starch biosynthesis. Involved in the trimming of pre-amylopectin chains. Accelerates the crystallization of nascent amylopectin molecules during starch synthesis. ISA1 and ISA2 work exclusively together as a multimeric holoenzyme. ISA1-ISA2 removes preferentially branches that are very close to other branches. The protein is Isoamylase 2, chloroplastic (ISA2) of Arabidopsis thaliana (Mouse-ear cress).